We begin with the raw amino-acid sequence, 388 residues long: Diacylglycerol O-acyltransferase 2 (388 aa).

Residues 1–69 are Cytoplasmic-facing; sequence MKTLIAAYSG…NRSKVEKHLQ (69 aa). The chain crosses the membrane as a helical span at residues 70-88; the sequence is VISVLQWVLSFLVLGVACS. Residues 89–92 are Lumenal-facing; that stretch reads VILM. Residues 93–112 traverse the membrane as a helical segment; sequence YTFCTDCWLIAALYFTWLAF. Residues 113-388 are Cytoplasmic-facing; the sequence is DWNTPKKGGR…LPETEVLEVN (276 aa).

The protein belongs to the diacylglycerol acyltransferase family. Forms multimeric complexes consisting of several DGAT2 subunits. Interacts with SLC27A1 and this interaction is enhanced in the presence of ZFYVE1.

Its subcellular location is the endoplasmic reticulum membrane. The protein resides in the lipid droplet. The protein localises to the cytoplasm. It localises to the perinuclear region. The catalysed reaction is an acyl-CoA + a 1,2-diacyl-sn-glycerol = a triacyl-sn-glycerol + CoA. It catalyses the reaction all-trans-retinol + an acyl-CoA = an all-trans-retinyl ester + CoA. The enzyme catalyses 2-(9Z-octadecenoyl)-glycerol + (9Z)-octadecenoyl-CoA = 1,2-di-(9Z-octadecenoyl)-sn-glycerol + CoA. It carries out the reaction 1,2-di-(9Z-octadecenoyl)-sn-glycerol + (9Z)-octadecenoyl-CoA = 1,2,3-tri-(9Z-octadecenoyl)-glycerol + CoA. The catalysed reaction is all-trans-retinol + hexadecanoyl-CoA = all-trans-retinyl hexadecanoate + CoA. It catalyses the reaction 1-O-(9Z-octadecenyl)-glycerol + (9Z)-octadecenoyl-CoA = 1-O-(9Z-octadecyl)-3-(9Z-octadecenoyl)-glycerol + CoA. The enzyme catalyses 1-(9Z-octadecenoyl)-glycerol + (9Z)-octadecenoyl-CoA = 1,2-di-(9Z-octadecenoyl)-glycerol + CoA. It carries out the reaction 1,2-di-(9Z-octadecenoyl)-sn-glycerol + hexadecanoyl-CoA = 1,2-di-(9Z)-octadecenoyl-3-hexadecanoyl-sn-glycerol + CoA. The catalysed reaction is 1,3-di-(9Z-octadecenoyl)-glycerol + (9Z)-octadecenoyl-CoA = 1,2,3-tri-(9Z-octadecenoyl)-glycerol + CoA. It catalyses the reaction 2,3-di-(9Z)-octadecenoyl-sn-glycerol + (9Z)-octadecenoyl-CoA = 1,2,3-tri-(9Z-octadecenoyl)-glycerol + CoA. The enzyme catalyses 2-(9Z-octadecenoyl)-glycerol + hexadecanoyl-CoA = 1-hexadecanoyl-2-(9Z-octadecenoyl)-sn-glycerol + CoA. Its pathway is glycerolipid metabolism; triacylglycerol biosynthesis. Inhibited by niacin. Its function is as follows. Essential acyltransferase that catalyzes the terminal and only committed step in triacylglycerol synthesis by using diacylglycerol and fatty acyl CoA as substrates. Required for synthesis and storage of intracellular triglycerides. Probably plays a central role in cytosolic lipid accumulation. In liver, is primarily responsible for incorporating endogenously synthesized fatty acids into triglycerides. Also functions as an acyl-CoA retinol acyltransferase (ARAT). Also able to use 1-monoalkylglycerol (1-MAkG) as an acyl acceptor for the synthesis of monoalkyl-monoacylglycerol (MAMAG). The polypeptide is Diacylglycerol O-acyltransferase 2 (Rattus norvegicus (Rat)).